Here is a 69-residue protein sequence, read N- to C-terminus: Iota-conotoxin LtIIIA (69 aa).

The N-terminal stretch at 1–20 (MLKMGVLLFTFLVLFPLTTL) is a signal peptide. A propeptide spanning residues 21 to 52 (ELDTDRPVERHAAIKQDLKPQERRGIRLHAPR) is cleaved from the precursor. 2 positions are modified to 4-carboxyglutamate: E54 and E57. Intrachain disulfides connect C55/C67, C56/C65, and C61/C68. The residue at position 58 (P58) is a 4-hydroxyproline.

In terms of tissue distribution, expressed by the venom duct.

Its subcellular location is the secreted. Iota-conotoxins bind to voltage-gated sodium channels and act as agonists by shifting the voltage-dependence of activation to more hyperpolarized levels. This toxin enhances tetrodotoxin-sensitive sodium current in rat dorsal root ganglion neurons. This Conus litteratus (Lettered cone) protein is Iota-conotoxin LtIIIA.